Consider the following 289-residue polypeptide: MRKVPGPITLIEPLSGNTSLLIKINAIHSVKKSPYQEIIIADTEDYGRVLILDDYIQSSYVDEQYYHESLVHPAMATHPNPRDVLILGGGEGATLREALKHGTVKRAVMVDIDRDVVELSRAYLPQMHQGAFDDPRAKVVIQDGFVYVEEAIKAGDKYDVIIMDLTDPYSSDIAKQLYTREFFAKIRRILNDDGVVVTQAGNSFYFPAEYDMVLEGVKANFPIVAEYEVWIPSFGYAVNFILGSLRYDPHALTPSEVDERLRARGVKTAFYTGRVHLALMNMPIHRKLR.

Residues 5-245 form the PABS domain; it reads PGPITLIEPL…YAVNFILGSL (241 aa). Q36 is an S-methyl-5'-thioadenosine binding site. Positions 67 and 91 each coordinate spermidine. Residues D111 and 143–144 contribute to the S-methyl-5'-thioadenosine site; that span reads DG. D164 functions as the Proton acceptor in the catalytic mechanism.

It belongs to the spermidine/spermine synthase family. In terms of assembly, homodimer or homotetramer.

Its subcellular location is the cytoplasm. It carries out the reaction S-adenosyl 3-(methylsulfanyl)propylamine + putrescine = S-methyl-5'-thioadenosine + spermidine + H(+). The protein operates within amine and polyamine biosynthesis; spermidine biosynthesis; spermidine from putrescine: step 1/1. Functionally, catalyzes the irreversible transfer of a propylamine group from the amino donor S-adenosylmethioninamine (decarboxy-AdoMet) to putrescine (1,4-diaminobutane) to yield spermidine. This Pyrobaculum calidifontis (strain DSM 21063 / JCM 11548 / VA1) protein is Polyamine aminopropyltransferase.